The primary structure comprises 314 residues: Probable cell division protein WhiA (314 aa).

The H-T-H motif DNA-binding region spans 282–314 (SLKELGELCRPPVSKSGAAHRMRQLMALAESLE).

The protein belongs to the WhiA family.

Its function is as follows. Involved in cell division and chromosome segregation. This Symbiobacterium thermophilum (strain DSM 24528 / JCM 14929 / IAM 14863 / T) protein is Probable cell division protein WhiA.